Here is a 560-residue protein sequence, read N- to C-terminus: Muellerian-inhibiting factor (560 aa).

The N-terminal stretch at 1–24 (MRDLPLTSLALVLSALGALLGTEA) is a signal peptide. The propeptide occupies 25–451 (LRAEEPAVGT…DPRGPGRAQR (427 aa)). Asparagine 64 carries N-linked (GlcNAc...) asparagine glycosylation. Residues 259–287 (PLPAHGQLDTVPFPPPRPSAELEESPPSA) are disordered. N-linked (GlcNAc...) asparagine glycosylation is present at asparagine 329. 3 disulfides stabilise this stretch: cysteine 462-cysteine 526, cysteine 488-cysteine 557, and cysteine 492-cysteine 559.

Belongs to the TGF-beta family. Homodimer; disulfide-linked. Preproprotein is proteolytically processed to generate N- and C-terminal cleavage products that homodimerize and associate to form a biologically active non-covalent complex. Binding of the non-covalent complex to AMHR2 induces dissociation of the pro-region from the mature C-terminal dimer. The N-terminal portion of the protein, despite having no intrinsic activity, has the role of amplifying the activity of the C-terminus. In terms of tissue distribution, in ovaries, AMH is detected in granulosa cells of early growing follicles.

It localises to the secreted. In terms of biological role, plays an important role in several reproductive functions. Induces Muellerian duct regression during male fetal sexual differentiation. Also plays a role in Leydig cell differentiation and function. In female acts as a negative regulator of the primordial to primary follicle transition and decreases FSH sensitivity of growing follicles. AMH signals by binding to a specific type-II receptor, AMHR2, that heterodimerizes with type-I receptors (ACVR1 and BMPR1A), and recruiting SMAD proteins that are translocated to the nucleus to regulate target gene expression. This is Muellerian-inhibiting factor from Homo sapiens (Human).